A 198-amino-acid polypeptide reads, in one-letter code: Alpha1-proteinase inhibitor-degradation deficient protein 37 (198 aa).

Position 79 is a phosphoserine (Ser-79).

It localises to the cytoplasm. Functionally, involved in ER-associated protein degradation (ERAD). This is Alpha1-proteinase inhibitor-degradation deficient protein 37 (ADD37) from Saccharomyces cerevisiae (strain ATCC 204508 / S288c) (Baker's yeast).